The chain runs to 209 residues: MVKVNIIFHSVHAHIYRMAEAVAAGAREVEGAEVGIYQVPETLPEDVLEKMGAIETKKLFAHIPVVTRDMYEDVLAGADALIFGTPTRYGMMTAQMRAVLDGLGKLWSEDAFVGKVGSVFTSSGTQHGGQESTILSFHVTLLHLGMVIVGLPYAEKRQTIMNEITGGSPYGASTIAGGDGSRQPSENELEMARYQGRHVTQIAKKIAGK.

The Flavodoxin-like domain maps to 4–199 (VNIIFHSVHA…EMARYQGRHV (196 aa)). Residues 10–15 (SVHAHI) and 87–89 (TRY) contribute to the FMN site. Residue Trp107 coordinates substrate. FMN contacts are provided by residues 122-128 (SSGTQHG) and His143.

Belongs to the WrbA family. FMN serves as cofactor.

It catalyses the reaction a quinone + NADH + H(+) = a quinol + NAD(+). It carries out the reaction a quinone + NADPH + H(+) = a quinol + NADP(+). This Methanosarcina mazei (strain ATCC BAA-159 / DSM 3647 / Goe1 / Go1 / JCM 11833 / OCM 88) (Methanosarcina frisia) protein is NAD(P)H dehydrogenase (quinone).